Here is a 698-residue protein sequence, read N- to C-terminus: MNPIVKSFEYGQHTVTLETGVIARQADAAVLASMGDTTVLVTVVGKKVADLSRDFFPLTVNYQEKTYAAGKIPGGFFKREGRPSEDETLIARLIDRPIRPLFPNGFKNEVQVIITVVSVDPQIEPDIVSMIGTSAALAISGIPFSGPLGAARVGYINDEYVLNPTVDQLATSSLNLVVAGTKAAVLMVESEAKALAEEIMLGAVTYGHDQQQVVVDAIAEFKAEAGKPTWDWTAPVQDQALVAKIKELAEAGMTEAYQIEVKQDRYVQVGIVKAAAKAALVAENPDVDTREVDNLLGSLEKSVVRGRIISGKPRIDGREPDMIRALSVLAGVLPRTHGSSLFTRGETQALVTCTLGTERDAQKIDSIMGERTNRFMLHYNFPPYSVGETGMVGSPKRREIGHGKLAWRGMNAVMPSAEEFPYSIRVVSEITESNGSSSMASVCGTSLALMDAGVPIKTSVAGIAMGLVKEGDDFVVLSDILGDEDHLGDMDFKVAGTRDGITALQMDIKIEGITKEIMDIALQQAYGARVHILNVMDQAIGTHRGDISAHAPRITTIKINPEKIRDVIGKGGAVIRALTEETGTTIELDDNGTVKIASSNGEATKEAIRRIEEITAEVEVGRIYNGKVIRIVDFGAFVNILPGKDGLVHISQISDERVANVSDHLEMNQEVAVKVMEVDRQGRVRLSIKEAQAKETAE.

2 residues coordinate Mg(2+): aspartate 485 and aspartate 491. Residues 552–611 enclose the KH domain; the sequence is PRITTIKINPEKIRDVIGKGGAVIRALTEETGTTIELDDNGTVKIASSNGEATKEAIRRI. In terms of domain architecture, S1 motif spans 621–689; the sequence is GRIYNGKVIR…RQGRVRLSIK (69 aa).

The protein belongs to the polyribonucleotide nucleotidyltransferase family. Component of the RNA degradosome, which is a multiprotein complex involved in RNA processing and mRNA degradation. The cofactor is Mg(2+).

Its subcellular location is the cytoplasm. It carries out the reaction RNA(n+1) + phosphate = RNA(n) + a ribonucleoside 5'-diphosphate. Its function is as follows. Involved in mRNA degradation. Catalyzes the phosphorolysis of single-stranded polyribonucleotides processively in the 3'- to 5'-direction. This chain is Polyribonucleotide nucleotidyltransferase, found in Shewanella frigidimarina (strain NCIMB 400).